A 1196-amino-acid polypeptide reads, in one-letter code: RNA-dependent RNA polymerase 6 (1196 aa).

Belongs to the RdRP family. Interacts with SGS3. In terms of tissue distribution, widely expressed.

Its subcellular location is the cytoplasmic granule. The protein resides in the nucleus. The catalysed reaction is RNA(n) + a ribonucleoside 5'-triphosphate = RNA(n+1) + diphosphate. In terms of biological role, RNA-dependent RNA polymerase involved in post-transcriptional gene silencing (PTGS). Possesses ssRNA and ssDNA-dependent polymerase activity, but does not have priming activity. Possesses in vitro 3' nucleotidyltransferase activity in the presence of UTP as single nucleotide. Required for the production of 21 nucleotide trans-acting small interfering RNAs (ta-siRNAs) derived from TAS1, TAS2 and TAS3 endogenous transcripts. Acts in the RDR6/SGS3/DCL4/AGO7 ta-siRNA pathway involved in leaf developmental timing. Required for the production of natural siRNAs (nat-siRNAs) derived from cis-natural antisense transcripts. Required for the production of 24 nucleotide nat-siRNAs derived from the stress-related P5CDH-SRO5 antisense gene pair. Required for PTGS induced by transgene direct repeats. Plays an essential role in transitive silencing of transgenes by processing secondary siRNAs. This pathway, which requires DCL2 and DCL4, amplifies silencing by using the target RNA as substrate to generate secondary siRNAs, providing an efficient mechanism for long-distance silencing. Involved in the biogenesis of secondary siRNAs which require 22 nucleotide miRNAs associated to AGO1. Participates synergistically with AS1 and AS2 to proper plant development by repressing the miR165 and miR166 microRNAs (independently of AGO10) that may lead to mRNA degradation of genes in the class III HD-ZIP family. Required for the production of some small RNAs derived from the crucifer-infecting tobamovirus (TMV-cg). Required for sense virus-induced post-transcriptional gene silencing (S-PTGS). In Arabidopsis thaliana (Mouse-ear cress), this protein is RNA-dependent RNA polymerase 6 (RDR6).